Here is a 79-residue protein sequence, read N- to C-terminus: Small ribosomal subunit protein bS18 (79 aa).

It belongs to the bacterial ribosomal protein bS18 family. As to quaternary structure, part of the 30S ribosomal subunit. Forms a tight heterodimer with protein bS6.

In terms of biological role, binds as a heterodimer with protein bS6 to the central domain of the 16S rRNA, where it helps stabilize the platform of the 30S subunit. The polypeptide is Small ribosomal subunit protein bS18 (Ureaplasma urealyticum serovar 10 (strain ATCC 33699 / Western)).